The primary structure comprises 474 residues: Probable threonine--tRNA ligase, mitochondrial (474 aa).

A mitochondrion-targeting transit peptide spans 1 to 27 (MMKLKKFQLHTPFAHSCNRVEIYTARF).

The protein belongs to the class-II aminoacyl-tRNA synthetase family.

It is found in the mitochondrion matrix. The enzyme catalyses tRNA(Thr) + L-threonine + ATP = L-threonyl-tRNA(Thr) + AMP + diphosphate + H(+). The chain is Probable threonine--tRNA ligase, mitochondrial from Schizosaccharomyces pombe (strain 972 / ATCC 24843) (Fission yeast).